Consider the following 1040-residue polypeptide: Multidrug resistance protein MdtB (1040 aa).

The next 12 membrane-spanning stretches (helical) occupy residues 16-36, 347-367, 369-389, 396-416, 440-460, 472-492, 537-557, 863-883, 888-908, 911-931, 968-988, and 998-1018; these read FIMRPVATTLLMVAILLAGII, LMMAIALVVMIIYLFLRNIPA, IIPGVAVPLSLIGTFAVMVFL, LTLMALTIATGFVVDDAIVVI, IGFTIISLTFSLIAVLIPLLF, FAITLAVAILISAVVSLTLTP, WLTLSVALSTLLLSVLLWVFI, LGSTVWLIVAAVVAMYIVLGI, FIHPITILSTLPTAGVGALLA, IAGSELDVIAIIGIILLIGIV, ILMTTLAALLGALPLMLSTGV, and IGMVGGLIVSQVLTLFTTPVI.

This sequence belongs to the resistance-nodulation-cell division (RND) (TC 2.A.6) family. MdtB subfamily. As to quaternary structure, part of a tripartite efflux system composed of MdtA, MdtB and MdtC. MdtB forms a heteromultimer with MdtC.

Its subcellular location is the cell inner membrane. The MdtABC tripartite complex confers resistance against novobiocin and deoxycholate. The sequence is that of Multidrug resistance protein MdtB from Escherichia coli O81 (strain ED1a).